We begin with the raw amino-acid sequence, 104 residues long: Replication restart protein PriB (104 aa).

Positions 1 to 101 constitute an SSB domain; sequence MTNRLVLSGT…LHAEQIELID (101 aa).

Belongs to the PriB family. In terms of assembly, homodimer. Interacts with PriA and DnaT. Component of the replication restart primosome. Primosome assembly occurs via a 'hand-off' mechanism. PriA binds to replication forks, subsequently PriB then DnaT bind; DnaT then displaces ssDNA to generate the helicase loading substrate.

Involved in the restart of stalled replication forks, which reloads the replicative helicase on sites other than the origin of replication; the PriA-PriB pathway is the major replication restart pathway. During primosome assembly it facilitates complex formation between PriA and DnaT on DNA; stabilizes PriA on DNA. Stimulates the DNA unwinding activity of PriA helicase. This chain is Replication restart protein PriB, found in Escherichia coli (strain ATCC 8739 / DSM 1576 / NBRC 3972 / NCIMB 8545 / WDCM 00012 / Crooks).